We begin with the raw amino-acid sequence, 519 residues long: MIPDVSHALTWLEAHPKALKGIRRGIERETLRVTADGQLASTGHPESLGAALTHQWITTDFAEALLEFITPVDGDIDHLLTFLRDIHRYTARKLGDERMWPLSMPCFIGAEQDIELAKYGSSNIGRFKTLYREGLKNRYGALMQTISGVHYNFSLPLEFWQAWAGVTDEKSGKEEISAGYFRLIRNYYRFGWVIPYLFGASPAICASFLQGRETALPFERNDKGMCYLPYATSLRLSDLGYTNKSQSNLGITFNDLHTYVAGLKRAIQTPSEEYAALGLKDGDRHLQLNTNVLQIENELYAPIRPKRVTRAGESPSDALLRGGIEYIEVRSLDINPFSPIGVDAVQARFLDLFLIWCVLADAPEMSSDELLCTRKNWNRVILEGRKPGQTIGMGCNDTREPLEKVGKDLFTDLRRVAEVLDGKDSTEYQQVCDELVASFDDPSLTFSARILQAMKEGGIGGVGLELAERYREMLQNEPLELLTEEQLSEEGAASWVRQRELELKDKLSFEEYLALHGGQ.

It belongs to the glutamate--cysteine ligase type 1 family. Type 1 subfamily.

It catalyses the reaction L-cysteine + L-glutamate + ATP = gamma-L-glutamyl-L-cysteine + ADP + phosphate + H(+). It functions in the pathway sulfur metabolism; glutathione biosynthesis; glutathione from L-cysteine and L-glutamate: step 1/2. In Yersinia enterocolitica serotype O:8 / biotype 1B (strain NCTC 13174 / 8081), this protein is Glutamate--cysteine ligase.